Here is a 182-residue protein sequence, read N- to C-terminus: A-type ATP synthase subunit E (182 aa).

The protein belongs to the V-ATPase E subunit family. Has multiple subunits with at least A(3), B(3), C, D, E, F, H, I and proteolipid K(x).

Its subcellular location is the cell membrane. In terms of biological role, component of the A-type ATP synthase that produces ATP from ADP in the presence of a proton gradient across the membrane. This chain is A-type ATP synthase subunit E, found in Methanothrix thermoacetophila (strain DSM 6194 / JCM 14653 / NBRC 101360 / PT) (Methanosaeta thermophila).